We begin with the raw amino-acid sequence, 394 residues long: Elongation factor Tu (394 aa).

A tr-type G domain is found at 10 to 204 (KPHVNVGTIG…ALDSYIPEPQ (195 aa)). A G1 region spans residues 19-26 (GHVDHGKT). Position 19 to 26 (19 to 26 (GHVDHGKT)) interacts with GTP. Residue threonine 26 coordinates Mg(2+). Positions 60 to 64 (GITIN) are G2. The G3 stretch occupies residues 81 to 84 (DCPG). GTP-binding positions include 81–85 (DCPGH) and 136–139 (NKCD). The segment at 136 to 139 (NKCD) is G4. The interval 174–176 (SAL) is G5.

This sequence belongs to the TRAFAC class translation factor GTPase superfamily. Classic translation factor GTPase family. EF-Tu/EF-1A subfamily. Monomer.

It localises to the cytoplasm. It carries out the reaction GTP + H2O = GDP + phosphate + H(+). Its function is as follows. GTP hydrolase that promotes the GTP-dependent binding of aminoacyl-tRNA to the A-site of ribosomes during protein biosynthesis. The chain is Elongation factor Tu from Shewanella baltica (strain OS185).